We begin with the raw amino-acid sequence, 532 residues long: O-phosphoserine--tRNA(Cys) ligase (532 aa).

Residues His-188 to Thr-190, Ser-233 to Ser-235, Tyr-275 to Tyr-276, and Asn-327 each bind substrate.

Belongs to the class-II aminoacyl-tRNA synthetase family. O-phosphoseryl-tRNA(Cys) synthetase subfamily. Homotetramer. Interacts with SepCysS.

It carries out the reaction tRNA(Cys) + O-phospho-L-serine + ATP = O-phospho-L-seryl-tRNA(Cys) + AMP + diphosphate. Catalyzes the attachment of O-phosphoserine (Sep) to tRNA(Cys). This Methanocella arvoryzae (strain DSM 22066 / NBRC 105507 / MRE50) protein is O-phosphoserine--tRNA(Cys) ligase.